Here is a 266-residue protein sequence, read N- to C-terminus: 4-hydroxy-tetrahydrodipicolinate reductase (266 aa).

NAD(+) contacts are provided by residues 8 to 13 and Glu33; that span reads GAAGRM. Arg34 is a binding site for NADP(+). NAD(+) contacts are provided by residues 97-99 and 121-124; these read GST and APNM. The Proton donor/acceptor role is filled by His154. Position 155 (His155) interacts with (S)-2,3,4,5-tetrahydrodipicolinate. Lys158 serves as the catalytic Proton donor. 164–165 contacts (S)-2,3,4,5-tetrahydrodipicolinate; that stretch reads GT.

Belongs to the DapB family.

It localises to the cytoplasm. The catalysed reaction is (S)-2,3,4,5-tetrahydrodipicolinate + NAD(+) + H2O = (2S,4S)-4-hydroxy-2,3,4,5-tetrahydrodipicolinate + NADH + H(+). The enzyme catalyses (S)-2,3,4,5-tetrahydrodipicolinate + NADP(+) + H2O = (2S,4S)-4-hydroxy-2,3,4,5-tetrahydrodipicolinate + NADPH + H(+). It participates in amino-acid biosynthesis; L-lysine biosynthesis via DAP pathway; (S)-tetrahydrodipicolinate from L-aspartate: step 4/4. Catalyzes the conversion of 4-hydroxy-tetrahydrodipicolinate (HTPA) to tetrahydrodipicolinate. This chain is 4-hydroxy-tetrahydrodipicolinate reductase, found in Trichlorobacter lovleyi (strain ATCC BAA-1151 / DSM 17278 / SZ) (Geobacter lovleyi).